Consider the following 86-residue polypeptide: MELSAEYLREKLQRDLEAEHVEVEDTTLNRCSCSFRVLVVSAKFEGKPLLQRHRLVNACLAEELPHIHAFEQKTLTPDQWARERQK.

N-acetylmethionine is present on Met1.

It belongs to the BolA/IbaG family. Interacts with GLRX3; forms a heterotrimeric complex composed by two BOLA2 molecules and one GLRX3 molecule; linked by [2Fe-2S] clusters.

The protein localises to the cytoplasm. It is found in the nucleus. Acts as a cytosolic iron-sulfur (Fe-S) cluster assembly factor that facilitates [2Fe-2S] cluster insertion into a subset of cytosolic proteins. Acts together with the monothiol glutaredoxin GLRX3. The protein is BolA-like protein 2 (BOLA2) of Homo sapiens (Human).